Consider the following 507-residue polypeptide: ATP synthase subunit alpha, chloroplastic (507 aa).

Position 170 to 177 (170 to 177 (GDRQTGKT)) interacts with ATP. A Phosphothreonine modification is found at threonine 257.

The protein belongs to the ATPase alpha/beta chains family. As to quaternary structure, F-type ATPases have 2 components, CF(1) - the catalytic core - and CF(0) - the membrane proton channel. CF(1) has five subunits: alpha(3), beta(3), gamma(1), delta(1), epsilon(1). CF(0) has four main subunits: a, b, b' and c.

The protein resides in the plastid. The protein localises to the chloroplast thylakoid membrane. It carries out the reaction ATP + H2O + 4 H(+)(in) = ADP + phosphate + 5 H(+)(out). In terms of biological role, produces ATP from ADP in the presence of a proton gradient across the membrane. The alpha chain is a regulatory subunit. The protein is ATP synthase subunit alpha, chloroplastic of Lobularia maritima (Sweet alyssum).